The chain runs to 3259 residues: Golgin subfamily B member 1 (3259 aa).

At Met-1 the chain carries N-acetylmethionine. The Cytoplasmic segment spans residues 1 to 3235 (MLSRLSGLAN…LRSLCHSRTR (3235 aa)). Residues Ser-6, Ser-17, Ser-138, and Ser-528 each carry the phosphoserine modification. The stretch at 48-593 (EDVQERLAYA…RAEEADHEVL (546 aa)) forms a coiled coil. Residues 119–142 (GTVLPTEPQSEEQLSKHDKSSTEE) form a disordered region. The span at 131-142 (QLSKHDKSSTEE) shows a compositional bias: basic and acidic residues. The tract at residues 624–652 (LMPNEESSLPAVEKEQASTEHQSRTSEEI) is disordered. The segment covering 635–650 (VEKEQASTEHQSRTSE) has biased composition (basic and acidic residues). Ser-653 is subject to Phosphoserine. 3 coiled-coil regions span residues 677–1028 (DIGQ…KEIP), 1062–1245 (LKQT…ESID), and 1301–1779 (GTSV…TEKH). The disordered stretch occupies residues 944-963 (AKKEQVEEDNEVSSGLKQNY). The span at 1747–1763 (SEKDSLSEEVQDLKHQI) shows a compositional bias: basic and acidic residues. The segment at 1747-1829 (SEKDSLSEEV…SANPAVSKDF (83 aa)) is disordered. Composition is skewed to polar residues over residues 1782–1794 (QTNVTEEGTQSIP) and 1802–1820 (SLSMSTRPTCSESVPSAKS). A coiled-coil region spans residues 1828-3185 (DFSSHDEINN…EQIRRLEHSE (1358 aa)). Residues Ser-2216, Ser-2735, Ser-2872, and Ser-2884 each carry the phosphoserine modification. Residues 2856-2876 (RKSEEGKQRSAAQPSTSPAEV) are disordered. The span at 2865 to 2875 (SAAQPSTSPAE) shows a compositional bias: polar residues. Residues 2998–3021 (TQPLKVQYQRQASPETSASPDGSQ) are disordered. Residue Ser-3037 is modified to Phosphoserine. Positions 3107–3140 (IDVAPGAPQEKNGVHRKSDPEELREPQQSFSEAQ) are disordered. Over residues 3118 to 3131 (NGVHRKSDPEELRE) the composition is skewed to basic and acidic residues. The chain crosses the membrane as a helical span at residues 3236–3256 (VPLLAAIYFLMIHVLLILCFT). Residues 3257 to 3259 (GHL) lie on the Lumenal side of the membrane.

In terms of assembly, homodimer; disulfide-linked. Interacts with PLK3.

It is found in the golgi apparatus membrane. Functionally, may participate in forming intercisternal cross-bridges of the Golgi complex. The polypeptide is Golgin subfamily B member 1 (GOLGB1) (Homo sapiens (Human)).